The sequence spans 427 residues: Transcobalamin-2 (427 aa).

An N-terminal signal peptide occupies residues 1 to 18 (MRHLGALLFLLGVLGALA). 3 disulfide bridges follow: cysteine 21/cysteine 267, cysteine 116/cysteine 309, and cysteine 165/cysteine 205. Cob(II)alamin is bound by residues glutamine 104, 152–156 (TSYYQ), histidine 190, 190–194 (HHSVD), asparagine 242, serine 245, glutamine 291, and 395–397 (WQL).

The protein belongs to the eukaryotic cobalamin transport proteins family. In terms of assembly, interacts with CD320 (via LDL-receptor class A domains).

Its subcellular location is the secreted. In terms of biological role, primary vitamin B12-binding and transport protein. Delivers cobalamin to cells. This is Transcobalamin-2 (TCN2) from Pongo abelii (Sumatran orangutan).